Consider the following 138-residue polypeptide: Large ribosomal subunit protein uL16 (138 aa).

A compositionally biased stretch (basic residues) spans 1 to 15; sequence MLSPKKVKYRKKQRG. The tract at residues 1–20 is disordered; sequence MLSPKKVKYRKKQRGRLSGE.

Belongs to the universal ribosomal protein uL16 family. As to quaternary structure, part of the 50S ribosomal subunit.

Binds 23S rRNA and is also seen to make contacts with the A and possibly P site tRNAs. This is Large ribosomal subunit protein uL16 from Borrelia hermsii (strain HS1 / DAH).